Reading from the N-terminus, the 547-residue chain is Chaperonin GroEL 1 (547 aa).

Residues 30-33 (TLGP), K51, 87-91 (DGTTT), G415, and D496 contribute to the ATP site.

The protein belongs to the chaperonin (HSP60) family. In terms of assembly, forms a cylinder of 14 subunits composed of two heptameric rings stacked back-to-back. Interacts with the co-chaperonin GroES.

The protein resides in the cytoplasm. It carries out the reaction ATP + H2O + a folded polypeptide = ADP + phosphate + an unfolded polypeptide.. Its function is as follows. Together with its co-chaperonin GroES, plays an essential role in assisting protein folding. The GroEL-GroES system forms a nano-cage that allows encapsulation of the non-native substrate proteins and provides a physical environment optimized to promote and accelerate protein folding. In Rhodopseudomonas palustris (strain BisB18), this protein is Chaperonin GroEL 1.